Here is a 152-residue protein sequence, read N- to C-terminus: Transcriptional regulator MraZ (152 aa).

2 consecutive SpoVT-AbrB domains span residues Ala-5–Glu-52 and Ala-81–Thr-124.

This sequence belongs to the MraZ family. Forms oligomers.

It localises to the cytoplasm. The protein resides in the nucleoid. Its function is as follows. Negatively regulates its own expression and that of the subsequent genes in the proximal part of the division and cell wall (dcw) gene cluster. Acts by binding directly to DNA. May also regulate the expression of genes outside the dcw cluster. This is Transcriptional regulator MraZ from Salmonella gallinarum (strain 287/91 / NCTC 13346).